The chain runs to 353 residues: Photosystem II D2 protein (353 aa).

T2 is modified (N-acetylthreonine). T2 carries the post-translational modification Phosphothreonine. The chain crosses the membrane as a helical span at residues 41–61; the sequence is TAYFALGGWFTGTTFVTSWYT. H118 is a binding site for chlorophyll a. The chain crosses the membrane as a helical span at residues 125 to 141; the sequence is GFMLRQFELARSVQLRP. Pheophytin a-binding residues include Q130 and N143. A helical membrane pass occupies residues 153-166; it reads VFVSVFLIYPLGQS. H198 serves as a coordination point for chlorophyll a. Residues 208–228 traverse the membrane as a helical segment; the sequence is AALLCAIHGATVENTLFEDGD. Residues H215 and F262 each coordinate a plastoquinone. H215 contributes to the Fe cation binding site. H269 lines the Fe cation pocket. Residues 279–295 traverse the membrane as a helical segment; that stretch reads GLWMSAIGVVGLALNLR.

Belongs to the reaction center PufL/M/PsbA/D family. As to quaternary structure, PSII is composed of 1 copy each of membrane proteins PsbA, PsbB, PsbC, PsbD, PsbE, PsbF, PsbH, PsbI, PsbJ, PsbK, PsbL, PsbM, PsbT, PsbX, PsbY, PsbZ, Psb30/Ycf12, at least 3 peripheral proteins of the oxygen-evolving complex and a large number of cofactors. It forms dimeric complexes. Requires The D1/D2 heterodimer binds P680, chlorophylls that are the primary electron donor of PSII, and subsequent electron acceptors. It shares a non-heme iron and each subunit binds pheophytin, quinone, additional chlorophylls, carotenoids and lipids. There is also a Cl(-1) ion associated with D1 and D2, which is required for oxygen evolution. The PSII complex binds additional chlorophylls, carotenoids and specific lipids. as cofactor.

The protein resides in the plastid. Its subcellular location is the chloroplast thylakoid membrane. The catalysed reaction is 2 a plastoquinone + 4 hnu + 2 H2O = 2 a plastoquinol + O2. Its function is as follows. Photosystem II (PSII) is a light-driven water:plastoquinone oxidoreductase that uses light energy to abstract electrons from H(2)O, generating O(2) and a proton gradient subsequently used for ATP formation. It consists of a core antenna complex that captures photons, and an electron transfer chain that converts photonic excitation into a charge separation. The D1/D2 (PsbA/PsbD) reaction center heterodimer binds P680, the primary electron donor of PSII as well as several subsequent electron acceptors. D2 is needed for assembly of a stable PSII complex. This Adiantum capillus-veneris (Maidenhair fern) protein is Photosystem II D2 protein.